Here is a 142-residue protein sequence, read N- to C-terminus: HTH-type transcriptional regulator MntR (142 aa).

Residues 1–63 (MPTPSMEDYI…YEKYRGLVLT (63 aa)) enclose the HTH dtxR-type domain. Residues aspartate 8, glutamate 11, histidine 77, glutamate 99, glutamate 102, and histidine 103 each contribute to the Mn(2+) site.

Belongs to the DtxR/MntR family. Homodimer.

The protein localises to the cytoplasm. DNA binding is strongly activated by Mn(2+). Central regulator of manganese homeostasis. This chain is HTH-type transcriptional regulator MntR, found in Bacillus cereus (strain G9842).